The chain runs to 309 residues: Porphobilinogen deaminase (309 aa).

The residue at position 241 (Cys-241) is an S-(dipyrrolylmethanemethyl)cysteine.

It belongs to the HMBS family. In terms of assembly, monomer. It depends on dipyrromethane as a cofactor.

It catalyses the reaction 4 porphobilinogen + H2O = hydroxymethylbilane + 4 NH4(+). It functions in the pathway porphyrin-containing compound metabolism; protoporphyrin-IX biosynthesis; coproporphyrinogen-III from 5-aminolevulinate: step 2/4. Tetrapolymerization of the monopyrrole PBG into the hydroxymethylbilane pre-uroporphyrinogen in several discrete steps. The sequence is that of Porphobilinogen deaminase from Desulforamulus reducens (strain ATCC BAA-1160 / DSM 100696 / MI-1) (Desulfotomaculum reducens).